Consider the following 373-residue polypeptide: tRNA-specific 2-thiouridylase MnmA (373 aa).

ATP contacts are provided by residues 12 to 19 (GMSGGVDS) and Met-38. Positions 98–100 (NPD) are interaction with target base in tRNA. Residue Cys-103 is the Nucleophile of the active site. A disulfide bridge connects residues Cys-103 and Cys-200. Residue Gly-127 coordinates ATP. Residues 150–152 (KDQ) are interaction with tRNA. Cys-200 serves as the catalytic Cysteine persulfide intermediate. The tract at residues 312–313 (RY) is interaction with tRNA.

It belongs to the MnmA/TRMU family.

Its subcellular location is the cytoplasm. The enzyme catalyses S-sulfanyl-L-cysteinyl-[protein] + uridine(34) in tRNA + AH2 + ATP = 2-thiouridine(34) in tRNA + L-cysteinyl-[protein] + A + AMP + diphosphate + H(+). Catalyzes the 2-thiolation of uridine at the wobble position (U34) of tRNA, leading to the formation of s(2)U34. The sequence is that of tRNA-specific 2-thiouridylase MnmA from Streptococcus pneumoniae (strain ATCC BAA-255 / R6).